The chain runs to 631 residues: DNA mismatch repair protein MutL (631 aa).

Disordered regions lie at residues 337-362 (PHSP…ELQS) and 400-429 (AVQS…RAEL).

This sequence belongs to the DNA mismatch repair MutL/HexB family.

Functionally, this protein is involved in the repair of mismatches in DNA. It is required for dam-dependent methyl-directed DNA mismatch repair. May act as a 'molecular matchmaker', a protein that promotes the formation of a stable complex between two or more DNA-binding proteins in an ATP-dependent manner without itself being part of a final effector complex. The protein is DNA mismatch repair protein MutL of Shewanella oneidensis (strain ATCC 700550 / JCM 31522 / CIP 106686 / LMG 19005 / NCIMB 14063 / MR-1).